The following is a 150-amino-acid chain: Large ribosomal subunit protein uL13 (150 aa).

The protein belongs to the universal ribosomal protein uL13 family. Part of the 50S ribosomal subunit.

This protein is one of the early assembly proteins of the 50S ribosomal subunit, although it is not seen to bind rRNA by itself. It is important during the early stages of 50S assembly. The sequence is that of Large ribosomal subunit protein uL13 from Mesoplasma florum (strain ATCC 33453 / NBRC 100688 / NCTC 11704 / L1) (Acholeplasma florum).